The sequence spans 448 residues: Serine--tRNA ligase (448 aa).

246-248 (TAE) is an L-serine binding site. Residues 277–279 (RKE) and Val-293 contribute to the ATP site. Position 300 (Glu-300) interacts with L-serine. Position 364-367 (364-367 (ELAS)) interacts with ATP. Thr-399 is a binding site for L-serine.

Belongs to the class-II aminoacyl-tRNA synthetase family. Type-1 seryl-tRNA synthetase subfamily. In terms of assembly, homodimer. The tRNA molecule binds across the dimer.

The protein resides in the cytoplasm. The catalysed reaction is tRNA(Ser) + L-serine + ATP = L-seryl-tRNA(Ser) + AMP + diphosphate + H(+). It carries out the reaction tRNA(Sec) + L-serine + ATP = L-seryl-tRNA(Sec) + AMP + diphosphate + H(+). Its pathway is aminoacyl-tRNA biosynthesis; selenocysteinyl-tRNA(Sec) biosynthesis; L-seryl-tRNA(Sec) from L-serine and tRNA(Sec): step 1/1. Catalyzes the attachment of serine to tRNA(Ser). Is also able to aminoacylate tRNA(Sec) with serine, to form the misacylated tRNA L-seryl-tRNA(Sec), which will be further converted into selenocysteinyl-tRNA(Sec). This is Serine--tRNA ligase from Pyrobaculum islandicum (strain DSM 4184 / JCM 9189 / GEO3).